A 445-amino-acid polypeptide reads, in one-letter code: Chromosome partition protein MukF (445 aa).

The interval 213-241 (LSETSSTLRELQDTLQAASDELQTQILDI) is leucine-zipper.

It belongs to the MukF family. In terms of assembly, interacts, and probably forms a ternary complex, with MukE and MukB via its C-terminal region. The complex formation is stimulated by calcium or magnesium. It is required for an interaction between MukE and MukB.

It is found in the cytoplasm. It localises to the nucleoid. Functionally, involved in chromosome condensation, segregation and cell cycle progression. May participate in facilitating chromosome segregation by condensation DNA from both sides of a centrally located replisome during cell division. Not required for mini-F plasmid partitioning. Probably acts via its interaction with MukB and MukE. Overexpression results in anucleate cells. It has a calcium binding activity. This chain is Chromosome partition protein MukF, found in Vibrio parahaemolyticus serotype O3:K6 (strain RIMD 2210633).